The primary structure comprises 567 residues: Hexose transporter HXT9 (567 aa).

Positions 1–16 are enriched in polar residues; the sequence is MSGVNNTSANDLSTTE. A disordered region spans residues 1 to 45; it reads MSGVNNTSANDLSTTESNSNSVANAPSVKTEHNDSKNSLNLDATE. Topologically, residues 1–56 are cytoplasmic; sequence MSGVNNTSANDLSTTESNSNSVANAPSVKTEHNDSKNSLNLDATEPPIDLPQKPLS. Residues 17–28 are compositionally biased toward low complexity; sequence SNSNSVANAPSV. Residues 57–77 traverse the membrane as a helical segment; that stretch reads AYTTVAILCLMIAFGGFIFGW. The Extracellular portion of the chain corresponds to 78 to 112; sequence DTGTISGFVNLSDFIRRFGQKNDKGTYYLSKVRMG. N-linked (GlcNAc...) asparagine glycosylation occurs at asparagine 87. Residues 113 to 133 form a helical membrane-spanning segment; the sequence is LIVSIFNIGCAIGGIVLSKVG. Topologically, residues 134 to 139 are cytoplasmic; it reads DIYGRR. A helical transmembrane segment spans residues 140-160; the sequence is IGLITVTAIYVVGILIQITSI. The Extracellular segment spans residues 161–170; that stretch reads NKWYQYFIGR. Residues 171-191 form a helical membrane-spanning segment; that stretch reads IISGLGVGGIAVLSPMLISEV. The Cytoplasmic segment spans residues 192–197; it reads APKQIR. Residues 198-218 form a helical membrane-spanning segment; sequence GTLVQLYQLMCTMGIFLGYCT. Topologically, residues 219–232 are extracellular; sequence NYGTKNYHNATQWR. Asparagine 227 carries an N-linked (GlcNAc...) asparagine glycan. Residues 233 to 253 form a helical membrane-spanning segment; it reads VGLGLCFAWTTFMVSGMMFVP. The Cytoplasmic portion of the chain corresponds to 254-336; the sequence is ESPRYLIEVG…IQSLQQLTGD (83 aa). Residues 337 to 353 form a helical membrane-spanning segment; it reads NYFFYYGTTIFKSVGLK. The Extracellular portion of the chain corresponds to 354–359; the sequence is DSFQTS. Residues 360-377 form a helical membrane-spanning segment; that stretch reads IIIGVVNFFSSFIAVYTI. Residues 378–384 lie on the Cytoplasmic side of the membrane; sequence ERFGRRT. A helical membrane pass occupies residues 385–405; sequence CLLWGAASMLCCFAVFASVGV. Residues 406–429 lie on the Extracellular side of the membrane; sequence TKLWPQGSSHQDITSQGAGNCMIV. Residues 430 to 450 traverse the membrane as a helical segment; sequence FTMFFIFSFATTWAGGCYVIV. At 451 to 467 the chain is on the cytoplasmic side; that stretch reads SETFPLRVKSRGMAIAT. Residues 468 to 488 form a helical membrane-spanning segment; sequence AANWMWGFLISFFTPFITGAI. Position 489 (asparagine 489) is a topological domain, extracellular. Residues 490–510 traverse the membrane as a helical segment; the sequence is FYYGYVFLGCLVFAYFYVFFF. Residues 511 to 567 lie on the Cytoplasmic side of the membrane; it reads VPETKGLTLEEVNTMWLEGVPAWKSASWVPPERRTADYDADAIDHDDRPIYKRFFSS.

The protein belongs to the major facilitator superfamily. Sugar transporter (TC 2.A.1.1) family.

It localises to the membrane. Its function is as follows. Probable glucose transporter. The polypeptide is Hexose transporter HXT9 (HXT9) (Saccharomyces cerevisiae (strain ATCC 204508 / S288c) (Baker's yeast)).